Reading from the N-terminus, the 751-residue chain is Nibrin (751 aa).

Residues 24-83 (YVVGRKNCGILIENDQSISRNHAVLTVNFPVTSLSQTDEIPTLTIKDNSKYGTFVNEEKM) form the FHA domain. 2 consecutive BRCT domains span residues 105–181 (KFRV…SEFL) and 224–315 (GKTF…LAVI). The segment at 111-328 (EPLVVCSSCL…TENYCNPQGQ (218 aa)) is mediates interaction with SP100. The segment at 221-403 (IFKGKTFVFL…SRKLSQETFN (183 aa)) is interaction with MTOR, MAPKAP1 and RICTOR. At Thr337 the chain carries Phosphothreonine. Ser343 is modified (phosphoserine; by ATM). Phosphoserine is present on residues Ser347 and Ser398. The disordered stretch occupies residues 389-418 (GLEQSSRKLSQETFNIKEAPKPSSKANNVA). Ser433 carries the phosphoserine; by CDK2 modification. A Glycyl lysine isopeptide (Lys-Gly) (interchain with G-Cter in ubiquitin) cross-link involves residue Lys436. 2 disordered regions span residues 444-479 (KDWTSQQQQNSIKNYFQPCTRKRERDEDNPELSSCK) and 491-550 (EQTQ…RKRK). A compositionally biased stretch (polar residues) spans 446-457 (WTSQQQQNSIKN). The short motif at 461–467 (PCTRKRE) is the Nuclear localization signal element. Basic and acidic residues-rich tracts occupy residues 502 to 518 (KSKEHQSQNATLDREAD) and 528 to 539 (ELNRKSPDRKPL). Ser508 carries the post-translational modification Phosphoserine. Residues Lys569 and Lys580 each participate in a glycyl lysine isopeptide (Lys-Gly) (interchain with G-Cter in SUMO2) cross-link. The interval 576–645 (VKVEKQEADD…ANSDGLQDSS (70 aa)) is disordered. Basic and acidic residues-rich tracts occupy residues 577-599 (KVEKQEADDTIRKKPRMDAERNR) and 615-636 (EDEREKKDELQTESWSTKHEIA). Glycyl lysine isopeptide (Lys-Gly) (interchain with G-Cter in ubiquitin) cross-links involve residues Lys684, Lys688, and Lys733. Residues 731-742 (QAKEESLADDLF) show a composition bias toward basic and acidic residues. The disordered stretch occupies residues 731 to 751 (QAKEESLADDLFRYNPNVKRR). The short motif at 738–747 (ADDLFRYNPN) is the FxF/Y motif element.

This sequence belongs to the Nibrin family. Component of the MRN complex composed of two heterodimers RAD50 and MRE11 associated with a single NBN. The MRN complexes dimerize on DNA to form joined MRN-MRN oligomers required for DNA double-strand break repair. As part of the MRN complex, interacts with MCM9; the interaction recruits the complex to DNA repair sites. Component of the BASC complex, at least composed of BRCA1, MSH2, MSH6, MLH1, ATM, BLM, RAD50, MRE11 and NBN. Interacts with histone H2AX; this requires phosphorylation of H2AX on 'Ser-139' and promotes NBN recruitment to DNA damage sites. Interacts with (phosphorylated) MDC1; promoting NBN recruitment to DNA damage sites. Interacts with (phosphorylated) RAD17; promoting NBN recruitment to DNA damage sites. Interacts (via FxF/Y motif) with ATM. Interacts with HJURP. Interacts with INTS3. Interacts with KPNA2. Interacts with TERF2; interaction is disrupted upon NBN phosphorylation by CDK2. Interacts with (phosphorylated) RBBP8/CtIP; the interaction links the role of the MRN complex in DNA double-strand break sensing to resection. Interacts with SP100; recruits NBN to PML bodies. Interacts with ATF2. Interacts with MTOR, MAPKAP1 isoform 2 and RICTOR; indicative for an association with the mTORC2 complex. Interacts with MRNIP. Interacts with UFL1; promoting UFL1 recruitment to double-strand breaks following DNA damage. Interacts with CYREN (via XLF motif). In terms of processing, ubiquitinated at Lys-436 via 'Lys-6'-linked ubiquitin chains by RNF8, promoting NBN recruitment to DNA double-strand breaks (DSBs). Ubiquitinated at Lys-684 and Lys-688 via 'Lys-63'-linked ubiquitin chains by PELI1: ubiquitination takes place following PELI1 phosphorylation and promotes ATM activation and DNA repair. Ubiquitinated at Lys-733 via 'Lys-63'-linked ubiquitin chains by the SCF(SKP2) complex: ubiquitination takes place following SKP2 phosphorylation and promotes ATM activation and DNA repair. Phosphorylated by ATM in response of ionizing radiation, and such phosphorylation is responsible intra-S phase checkpoint control and telomere maintenance. Phosphorylated at Ser-433 by CDK2 in S/G2 phases abolishes interaction with TERF2, enabling DCLRE1B/Apollo recruitment to telomeres. Phosphorylation at Ser-433 in response to dysfunctional telomeres promotes non-homologous end joining repair at telomeres, while dephosphorylation by PPP1CA promotes microhomology-mediated end-joining (MMEJ) repair. In terms of tissue distribution, high expression in the liver, heart and testis. Low expression in all other tissues analyzed. In the cerebellum the postmitotic Purkinje cells are marked specifically.

It is found in the nucleus. The protein resides in the chromosome. Its subcellular location is the PML body. The protein localises to the telomere. Component of the MRN complex, which plays a central role in double-strand break (DSB) repair, DNA recombination, maintenance of telomere integrity and meiosis. The MRN complex is involved in the repair of DNA double-strand breaks (DSBs) via homologous recombination (HR), an error-free mechanism which primarily occurs during S and G2 phases. The complex (1) mediates the end resection of damaged DNA, which generates proper single-stranded DNA, a key initial steps in HR, and is (2) required for the recruitment of other repair factors and efficient activation of ATM and ATR upon DNA damage. The MRN complex possesses single-strand endonuclease activity and double-strand-specific 3'-5' exonuclease activity, which are provided by MRE11, to initiate end resection, which is required for single-strand invasion and recombination. Within the MRN complex, NBN acts as a protein-protein adapter, which specifically recognizes and binds phosphorylated proteins, promoting their recruitment to DNA damage sites. Recruits MRE11 and RAD50 components of the MRN complex to DSBs in response to DNA damage. Promotes the recruitment of PI3/PI4-kinase family members ATM, ATR, and probably DNA-PKcs to the DNA damage sites, activating their functions. Mediates the recruitment of phosphorylated RBBP8/CtIP to DSBs, leading to cooperation between the MRN complex and RBBP8/CtIP to initiate end resection. RBBP8/CtIP specifically promotes the endonuclease activity of the MRN complex to clear DNA ends containing protein adducts. The MRN complex is also required for the processing of R-loops. NBN also functions in telomere length maintenance via its interaction with TERF2: interaction with TERF2 during G1 phase preventing recruitment of DCLRE1B/Apollo to telomeres. NBN also promotes DNA repair choice at dysfunctional telomeres: NBN phosphorylation by CDK2 promotes non-homologous end joining repair at telomeres, while unphosphorylated NBN promotes microhomology-mediated end-joining (MMEJ) repair. Enhances AKT1 phosphorylation possibly by association with the mTORC2 complex. This is Nibrin from Mus musculus (Mouse).